A 151-amino-acid polypeptide reads, in one-letter code: Macrodomain Ter protein (151 aa).

It belongs to the MatP family. As to quaternary structure, homodimer.

It localises to the cytoplasm. Functionally, required for spatial organization of the terminus region of the chromosome (Ter macrodomain) during the cell cycle. Prevents early segregation of duplicated Ter macrodomains during cell division. Binds specifically to matS, which is a 13 bp signature motif repeated within the Ter macrodomain. This is Macrodomain Ter protein from Photorhabdus laumondii subsp. laumondii (strain DSM 15139 / CIP 105565 / TT01) (Photorhabdus luminescens subsp. laumondii).